A 1758-amino-acid chain; its full sequence is RanBP2-like and GRIP domain-containing protein 4 (1758 aa).

The residue at position 21 (S21) is a Phosphoserine. TPR repeat units lie at residues 60 to 93 (PRAH…NPTQ) and 584 to 617 (QKMG…LKII). Residues 761–805 (DPLYKNGSLRNADSEIKHSTPSPTKYSLSPSKSYKYSPKTPPRWA) form a disordered region. Residues 779–798 (STPSPTKYSLSPSKSYKYSP) show a composition bias toward low complexity. The RanBD1 1 domain occupies 1037–1173 (HFEPVVQMPE…FEECQQLLLD (137 aa)). Disordered regions lie at residues 1213 to 1249 (QTKV…TLEW) and 1295 to 1332 (SFKS…ERDG). Positions 1236–1245 (IKPNPENTGP) are enriched in polar residues. Residues 1295-1309 (SFKSALSPSKSPAKL) show a composition bias toward low complexity. Over residues 1318 to 1330 (TDEESDVTQEEER) the composition is skewed to acidic residues. The RanBD1 2 domain maps to 1334-1470 (YFEPVVPLPD…FDEAKTAQEK (137 aa)). Polar residues predominate over residues 1583–1594 (SETSSVAQSGSE). Residues 1583–1621 (SETSSVAQSGSESKVEPKKCELSKNSDIEQSSDSKVKNL) are disordered. A compositionally biased stretch (basic and acidic residues) spans 1595-1618 (SKVEPKKCELSKNSDIEQSSDSKV). In terms of domain architecture, GRIP spans 1703–1753 (QEESAANVEHLKNVLLQFIFLKPGSERERLLPVINTMLQLSPEEKGKLAAV).

The polypeptide is RanBP2-like and GRIP domain-containing protein 4 (RGPD4) (Homo sapiens (Human)).